Reading from the N-terminus, the 130-residue chain is MTTQRKPYVRTMTPTWWQKLGFYRFYMLREGTSVPAVWFSIVLIYGVFALKGGVDSWAGFVGFLQNPLVLLINFVALLAALLHTKTWFDLAPKAANIVVNSEKMGPGPIVKTLWAVTVVASVVILAVALV.

3 consecutive transmembrane segments (helical) span residues 34–54 (VPAV…KGGV), 60–80 (FVGF…LLAA), and 109–129 (IVKT…AVAL).

The protein belongs to the FrdC family. In terms of assembly, part of an enzyme complex containing four subunits: a flavoprotein (FrdA), an iron-sulfur protein (FrdB), and two hydrophobic anchor proteins (FrdC and FrdD).

Its subcellular location is the cell inner membrane. In terms of biological role, two distinct, membrane-bound, FAD-containing enzymes are responsible for the catalysis of fumarate and succinate interconversion; fumarate reductase is used in anaerobic growth, and succinate dehydrogenase is used in aerobic growth. Anchors the catalytic components of the fumarate reductase complex to the cell inner membrane, binds quinones. This Serratia proteamaculans (strain 568) protein is Fumarate reductase subunit C.